Reading from the N-terminus, the 60-residue chain is Large ribosomal subunit protein uL30 (60 aa).

The protein belongs to the universal ribosomal protein uL30 family. In terms of assembly, part of the 50S ribosomal subunit.

The protein is Large ribosomal subunit protein uL30 of Streptococcus equi subsp. equi (strain 4047).